The primary structure comprises 741 residues: Alpha-1,6-mannosylglycoprotein 6-beta-N-acetylglucosaminyltransferase A (741 aa).

The Cytoplasmic segment spans residues 1-13 (MALFTPWKLSSQK). The helical; Signal-anchor for type II membrane protein transmembrane segment at 14-30 (LGFFLVTFGFIWGMMLL) threads the bilayer. The Lumenal segment spans residues 31–741 (HFTIQQRTQP…GQVALCKDCL (711 aa)). 3 N-linked (GlcNAc...) asparagine glycosylation sites follow: N110, N115, and N118. 9 disulfides stabilise this stretch: C145-C183, C156-C196, C172-C338, C372-C626, C649-C724, C653-C726, C660-C713, C681-C702, and C737-C740. A sufficient for catalytic activity region spans residues 213–741 (NSLAEIRTDF…GQVALCKDCL (529 aa)). The interval 264-269 (KRKRKK) is important for activity in FGF2 release. N-linked (GlcNAc...) asparagine glycosylation is present at N334. 378–379 (DS) serves as a coordination point for substrate. 2 N-linked (GlcNAc...) asparagine glycosylation sites follow: N433 and N447. E526 provides a ligand contact to UDP-N-acetyl-alpha-D-glucosamine. K554 contacts substrate.

The protein belongs to the glycosyltransferase 18 family. In terms of processing, N-glycosylated. Post-translationally, a secreted form is released from the membrane after cleavage by gamma-secretase.

The protein resides in the golgi apparatus membrane. The protein localises to the secreted. The enzyme catalyses N(4)-{beta-D-GlcNAc-(1-&gt;2)-[beta-D-GlcNAc-(1-&gt;4)]-alpha-D-Man-(1-&gt;3)-[beta-D-GlcNAc-(1-&gt;2)-alpha-D-Man-(1-&gt;6)]-beta-D-Man-(1-&gt;4)-beta-D-GlcNAc-(1-&gt;4)-beta-D-GlcNAc}-L-asparaginyl-[protein] + UDP-N-acetyl-alpha-D-glucosamine = N(4)-{beta-D-GlcNAc-(1-&gt;2)-[beta-D-GlcNAc-(1-&gt;4)]-alpha-D-Man-(1-&gt;3)-[beta-D-GlcNAc-(1-&gt;2)-[beta-D-GlcNAc-(1-&gt;6)]-alpha-D-Man-(1-&gt;6)]-beta-D-Man-(1-&gt;4)-beta-D-GlcNAc-(1-&gt;4)-beta-D-GlcNAc}-L-asparaginyl-[protein] + UDP + H(+). Its pathway is protein modification; protein glycosylation. With respect to regulation, activity is increased by Mn(2+) and Mg(2+). In terms of biological role, catalyzes the addition of N-acetylglucosamine (GlcNAc) in beta 1-6 linkage to the alpha-linked mannose of biantennary N-linked oligosaccharides. Catalyzes an important step in the biosynthesis of branched, complex-type N-glycans, such as those found on EGFR, TGFR (TGF-beta receptor) and CDH2. Via its role in the biosynthesis of complex N-glycans, plays an important role in the activation of cellular signaling pathways, reorganization of the actin cytoskeleton, cell-cell adhesion and cell migration. MGAT5-dependent EGFR N-glycosylation enhances the interaction between EGFR and LGALS3 and thereby prevents rapid EGFR endocytosis and prolongs EGFR signaling. Required for efficient interaction between TGFB1 and its receptor. Enhances activation of intracellular signaling pathways by several types of growth factors, including FGF2, PDGF, IGF, TGFB1 and EGF. MGAT5-dependent CDH2 N-glycosylation inhibits CDH2-mediated homotypic cell-cell adhesion and contributes to the regulation of downstream signaling pathways. Promotes cell migration. Contributes to the regulation of the inflammatory response. MGAT5-dependent TCR N-glycosylation enhances the interaction between TCR and LGALS3, limits agonist-induced TCR clustering, and thereby dampens TCR-mediated responses to antigens. Required for normal leukocyte evasation and accumulation at sites of inflammation. Inhibits attachment of monocytes to the vascular endothelium and subsequent monocyte diapedesis. Functionally, promotes proliferation of umbilical vein endothelial cells and angiogenesis, at least in part by promoting the release of the growth factor FGF2 from the extracellular matrix. The chain is Alpha-1,6-mannosylglycoprotein 6-beta-N-acetylglucosaminyltransferase A (MGAT5) from Homo sapiens (Human).